The primary structure comprises 331 residues: Calcium-binding and coiled-coil domain-containing protein 2 (331 aa).

The CLIR signature appears at 128–131 (IMVV). Residues 132 to 309 (INKEKVEEME…EKASWEKEKA (178 aa)) adopt a coiled-coil conformation. The interval 189–310 (KASWEKEKAS…KASWEKEKAP (122 aa)) is disordered. An LIR-like motif is present at residues 190-193 (ASWE). Residues 292–302 (KEKASWEEEKA) form an interaction with LGALS8 region.

The protein belongs to the CALCOCO family. Dimer. Part of a complex consisting of CALCOCO2, TAX1BP1 and MYO6. Interacts with MYO6. Interacts with GEMIN4. Interacts with ATG8 family members MAP1LC3A, MAP1LC3B, GABARAP, GABARAPL1 and GABARAPL2. Interacts with ATG8 family member MAP1LC3C. Interacts with LGALS8. Interacts with TOM1; the interaction is indirect and is mediated by MYO6, which acts as a bridge between TOM1 and CALCOCO2. Interacts with AZI2.

It localises to the cytoplasm. It is found in the perinuclear region. The protein localises to the cytoskeleton. The protein resides in the cytoplasmic vesicle. Its subcellular location is the autophagosome membrane. Its function is as follows. Xenophagy-specific receptor required for autophagy-mediated intracellular bacteria degradation. Acts as an effector protein of galectin-sensed membrane damage that restricts the proliferation of infecting pathogens upon entry into the cytosol by targeting LGALS8-associated bacteria for autophagy. Initially orchestrates bacteria targeting to autophagosomes and subsequently ensures pathogen degradation by regulating pathogen-containing autophagosome maturation. Bacteria targeting to autophagosomes relies on its interaction with MAP1LC3A, MAP1LC3B and/or GABARAPL2, whereas regulation of pathogen-containing autophagosome maturation requires the interaction with MAP3LC3C. May play a role in ruffle formation and actin cytoskeleton organization and seems to negatively regulate constitutive secretion. This chain is Calcium-binding and coiled-coil domain-containing protein 2, found in Mus musculus (Mouse).